Here is a 775-residue protein sequence, read N- to C-terminus: Endothelin-converting enzyme-like 1 (775 aa).

Residues 1-61 (MEAPYSMTAH…LPRWNRREVC (61 aa)) are Cytoplasmic-facing. The interval 23–51 (CGTGGARGTSLPPGFPRSSGRSASGARSG) is disordered. The segment covering 32–51 (SLPPGFPRSSGRSASGARSG) has biased composition (low complexity). A helical; Signal-anchor for type II membrane protein membrane pass occupies residues 62 to 82 (LLSGLVFAAGLCAILAAMLAL). The Lumenal segment spans residues 83–775 (KYLGPGAAGT…MNPVHKCSVW (693 aa)). The 677-residue stretch at 99-775 (GCPERKAFAR…MNPVHKCSVW (677 aa)) folds into the Peptidase M13 domain. 4 disulfides stabilise this stretch: C124–C760, C132–C720, C188–C441, and C649–C772. N-linked (GlcNAc...) asparagine glycosylation is found at N255 and N322. H612 lines the Zn(2+) pocket. Residue E613 is part of the active site. H616 lines the Zn(2+) pocket. N656 carries an N-linked (GlcNAc...) asparagine glycan. A Zn(2+)-binding site is contributed by E672. The Proton donor role is filled by D676.

This sequence belongs to the peptidase M13 family. The cofactor is Zn(2+). As to expression, highly expressed in the CNS, in particular in neurons of the caudate putamen, diagonal band, the paraventricular nucleus of the thalamus, part of the hypothalamus, in cranial motor nuclei, inferior olive, and substantia gelatinosa of the spinal tract trigeminal nucleus. Not detected in cerebral cortex, hippocampus and cerebellum.

Its subcellular location is the membrane. Functionally, may contribute to the degradation of peptide hormones and be involved in the inactivation of neuronal peptides. Cleaves the synthetic substrate Z-Gly-Gly-Leu-pNA and releases pNA. May protect against C2-ceramide-induced apoptosis. This is Endothelin-converting enzyme-like 1 (Ecel1) from Rattus norvegicus (Rat).